The sequence spans 1201 residues: DNA-directed RNA polymerase subunit beta' (1201 aa).

Zn(2+) is bound by residues Cys-60, Cys-62, Cys-75, and Cys-78. Mg(2+)-binding residues include Asp-449, Asp-451, and Asp-453. Residues Cys-818, Cys-892, Cys-899, and Cys-902 each coordinate Zn(2+).

It belongs to the RNA polymerase beta' chain family. The RNAP catalytic core consists of 2 alpha, 1 beta, 1 beta' and 1 omega subunit. When a sigma factor is associated with the core the holoenzyme is formed, which can initiate transcription. It depends on Mg(2+) as a cofactor. Requires Zn(2+) as cofactor.

It carries out the reaction RNA(n) + a ribonucleoside 5'-triphosphate = RNA(n+1) + diphosphate. DNA-dependent RNA polymerase catalyzes the transcription of DNA into RNA using the four ribonucleoside triphosphates as substrates. This chain is DNA-directed RNA polymerase subunit beta', found in Listeria monocytogenes serovar 1/2a (strain ATCC BAA-679 / EGD-e).